Reading from the N-terminus, the 118-residue chain is Melanoma antigen recognized by T-cells 1 (118 aa).

A helical transmembrane segment spans residues 27–47 (AAGIGILTVILGVLLLIGCWY). The Cytoplasmic portion of the chain corresponds to 48–118 (CRRRNGYRAL…AEQSPPPYSP (71 aa)). Residues 78-118 (GFDHRDSKVSLQEKNCEPVVPNAPPAYEKLSAEQSPPPYSP) are disordered. Residue Ser-108 is modified to Phosphoserine.

In terms of assembly, interacts with PMEL. Interacts with GPR143. In terms of processing, acylated. As to expression, expression is restricted to melanoma and melanocyte cell lines and retina.

The protein localises to the endoplasmic reticulum membrane. It is found in the golgi apparatus. Its subcellular location is the trans-Golgi network membrane. The protein resides in the melanosome. In terms of biological role, involved in melanosome biogenesis by ensuring the stability of GPR143. Plays a vital role in the expression, stability, trafficking, and processing of melanocyte protein PMEL, which is critical to the formation of stage II melanosomes. This Homo sapiens (Human) protein is Melanoma antigen recognized by T-cells 1 (MLANA).